Reading from the N-terminus, the 822-residue chain is Myosin-D (822 aa).

The 676-residue stretch at Leu-95–Arg-770 folds into the Myosin motor domain. Gly-189–Thr-196 is a binding site for ATP. An actin-binding region spans residues Ser-660–Asp-670. Residues Ala-772 to Cys-822 form a tail region.

It belongs to the TRAFAC class myosin-kinesin ATPase superfamily. Myosin family.

It is found in the cell membrane. The protein resides in the cytoplasm. In terms of biological role, myosins are actin-based motor molecules with ATPase activity. Unconventional myosins serve in intracellular movements. Their highly divergent tails are presumed to bind to membranous compartments, which would be moved relative to actin filaments. The chain is Myosin-D from Toxoplasma gondii.